The following is a 142-amino-acid chain: Photosystem II extrinsic protein U (142 aa).

The N-terminal stretch at 1–29 is a signal peptide; the sequence is MKGLVRLLTVFSLLLGCWGWLGTTQIAQA.

It belongs to the PsbU family. PSII is composed of 1 copy each of membrane proteins PsbA, PsbB, PsbC, PsbD, PsbE, PsbF, PsbH, PsbI, PsbJ, PsbK, PsbL, PsbM, PsbT, PsbX, PsbY, PsbZ, Psb30/Ycf12, peripheral proteins PsbO, CyanoQ (PsbQ), PsbU, PsbV and a large number of cofactors. It forms dimeric complexes.

Its subcellular location is the cellular thylakoid membrane. Its function is as follows. One of the extrinsic, lumenal subunits of photosystem II (PSII). PSII is a light-driven water plastoquinone oxidoreductase, using light energy to abstract electrons from H(2)O, generating a proton gradient subsequently used for ATP formation. The extrinsic proteins stabilize the structure of photosystem II oxygen-evolving complex (OEC), the ion environment of oxygen evolution and protect the OEC against heat-induced inactivation. The sequence is that of Photosystem II extrinsic protein U from Nostoc sp. (strain PCC 7120 / SAG 25.82 / UTEX 2576).